Reading from the N-terminus, the 721-residue chain is 1,4-alpha-glucan branching enzyme GlgB (721 aa).

Asp-400 acts as the Nucleophile in catalysis. Catalysis depends on Glu-453, which acts as the Proton donor.

It belongs to the glycosyl hydrolase 13 family. GlgB subfamily. As to quaternary structure, monomer.

The catalysed reaction is Transfers a segment of a (1-&gt;4)-alpha-D-glucan chain to a primary hydroxy group in a similar glucan chain.. It functions in the pathway glycan biosynthesis; glycogen biosynthesis. Its function is as follows. Catalyzes the formation of the alpha-1,6-glucosidic linkages in glycogen by scission of a 1,4-alpha-linked oligosaccharide from growing alpha-1,4-glucan chains and the subsequent attachment of the oligosaccharide to the alpha-1,6 position. The chain is 1,4-alpha-glucan branching enzyme GlgB from Chlamydia abortus (strain DSM 27085 / S26/3) (Chlamydophila abortus).